Here is a 494-residue protein sequence, read N- to C-terminus: Guanosine-5'-triphosphate,3'-diphosphate pyrophosphatase (494 aa).

It belongs to the GppA/Ppx family. GppA subfamily.

It catalyses the reaction guanosine 3'-diphosphate 5'-triphosphate + H2O = guanosine 3',5'-bis(diphosphate) + phosphate + H(+). It functions in the pathway purine metabolism; ppGpp biosynthesis; ppGpp from GTP: step 2/2. Catalyzes the conversion of pppGpp to ppGpp. Guanosine pentaphosphate (pppGpp) is a cytoplasmic signaling molecule which together with ppGpp controls the 'stringent response', an adaptive process that allows bacteria to respond to amino acid starvation, resulting in the coordinated regulation of numerous cellular activities. This is Guanosine-5'-triphosphate,3'-diphosphate pyrophosphatase from Escherichia coli O127:H6 (strain E2348/69 / EPEC).